Here is a 347-residue protein sequence, read N- to C-terminus: Globoside alpha-1,3-N-acetylgalactosaminyltransferase 1 (347 aa).

The Cytoplasmic segment spans residues 1–5 (MRCRR). A helical; Signal-anchor for type II membrane protein membrane pass occupies residues 6–26 (LALGLGFSLLSGIALWSLWIY). Residues 27-347 (METWLPFSYV…LDKATSWLRS (321 aa)) are Lumenal-facing. Residue asparagine 108 is glycosylated (N-linked (GlcNAc...) asparagine). Substrate is bound by residues 116 to 121 (FAVGKY), 206 to 208 (DVD), and 228 to 231 (HPGY). Positions 206 and 208 each coordinate Mn(2+). Glutamate 298 functions as the Nucleophile in the catalytic mechanism.

The protein belongs to the glycosyltransferase 6 family. The cofactor is Mn(2+).

It is found in the golgi apparatus membrane. It carries out the reaction a globoside Gb4Cer (d18:1(4E)) + UDP-N-acetyl-alpha-D-galactosamine = a globoside Forssman (d18:1(4E)) + UDP + H(+). It catalyses the reaction a globoside Gb4Cer + UDP-N-acetyl-alpha-D-galactosamine = a globoside IV3GalNAc-Gb4Cer + UDP + H(+). It participates in protein modification; protein glycosylation. Its function is as follows. Catalyzes the formation of Forssman glycolipid via the addition of N-acetylgalactosamine (GalNAc) in alpha-1,3-linkage to GalNAcb-1,3Gala-1,4Galb-1,4GlcCer (Gb4Cer). Forssman glycolipid (also called Forssman antigen; FG) probably serves for adherence of some pathogens such as E.coli uropathogenic strains. The polypeptide is Globoside alpha-1,3-N-acetylgalactosaminyltransferase 1 (Canis lupus familiaris (Dog)).